The sequence spans 92 residues: Large ribosomal subunit protein bL25 (92 aa).

It belongs to the bacterial ribosomal protein bL25 family. Part of the 50S ribosomal subunit; part of the 5S rRNA/L5/L18/L25 subcomplex. Contacts the 5S rRNA. Binds to the 5S rRNA independently of L5 and L18.

Its function is as follows. This is one of the proteins that binds to the 5S RNA in the ribosome where it forms part of the central protuberance. This is Large ribosomal subunit protein bL25 from Aliivibrio salmonicida (strain LFI1238) (Vibrio salmonicida (strain LFI1238)).